A 245-amino-acid chain; its full sequence is Polyhedrin (245 aa).

The interval Lys-32–Lys-35 is nuclear localization signal.

The protein belongs to the polyhedrin family.

The protein resides in the host nucleus. Its function is as follows. Major component of the virus occlusion bodies which are large proteinaceous structures termed polyhedra. These structures serve as the protective package for the virus particles outside the infected host and allow natural transmission of virus between insect hosts, assisting persistence in the environment. Forms the paracrystalline lattice of polyhedra and interacts with enveloped virions as well as other accessory molecules and structures to form a mature viral occlusion body. The chain is Polyhedrin (PH) from Lepidoptera (butterflies and moths).